Consider the following 953-residue polypeptide: Isoleucine--tRNA ligase (953 aa).

Residues 57-67 (PYANGDIHIGH) carry the 'HIGH' region motif. Residue Glu582 coordinates L-isoleucyl-5'-AMP. The short motif at 623 to 627 (KMSKS) is the 'KMSKS' region element. Lys626 is a binding site for ATP. Cys916, Cys919, Cys936, and Cys939 together coordinate Zn(2+).

This sequence belongs to the class-I aminoacyl-tRNA synthetase family. IleS type 1 subfamily. As to quaternary structure, monomer. The cofactor is Zn(2+).

It localises to the cytoplasm. The enzyme catalyses tRNA(Ile) + L-isoleucine + ATP = L-isoleucyl-tRNA(Ile) + AMP + diphosphate. Functionally, catalyzes the attachment of isoleucine to tRNA(Ile). As IleRS can inadvertently accommodate and process structurally similar amino acids such as valine, to avoid such errors it has two additional distinct tRNA(Ile)-dependent editing activities. One activity is designated as 'pretransfer' editing and involves the hydrolysis of activated Val-AMP. The other activity is designated 'posttransfer' editing and involves deacylation of mischarged Val-tRNA(Ile). The sequence is that of Isoleucine--tRNA ligase from Bordetella petrii (strain ATCC BAA-461 / DSM 12804 / CCUG 43448).